The sequence spans 167 residues: Small ribosomal subunit protein uS5 (167 aa).

Residues 11–74 (LQEKLIAVNR…EKARRNMINV (64 aa)) form the S5 DRBM domain.

This sequence belongs to the universal ribosomal protein uS5 family. In terms of assembly, part of the 30S ribosomal subunit. Contacts proteins S4 and S8.

Functionally, with S4 and S12 plays an important role in translational accuracy. In terms of biological role, located at the back of the 30S subunit body where it stabilizes the conformation of the head with respect to the body. The sequence is that of Small ribosomal subunit protein uS5 from Shigella dysenteriae serotype 1 (strain Sd197).